The following is a 395-amino-acid chain: Nickel and cobalt resistance protein CnrB (395 aa).

A helical membrane pass occupies residues 13 to 33 (MIAGVAAVAAAVGFGAAHLPV). The segment at 35–55 (EKSPASTQAPEAQKPQSAPVK) is disordered. The span at 37-50 (SPASTQAPEAQKPQ) shows a compositional bias: polar residues. A coiled-coil region spans residues 140 to 193 (AAERKVAQAKADLARKTYEREASLFQQGVTPRQEMEAAKAALDVAQAEALRAAT).

Belongs to the membrane fusion protein (MFP) (TC 8.A.1) family.

Its subcellular location is the cell inner membrane. Functionally, the products of the genes cnrA, cnrB, and cnrC are likely to form a membrane-bound protein complex catalyzing an energy-dependent efflux of Ni(2+) and Co(2+). The mechanism of action of the CnrCBA complex may be that of a proton/cation antiporter. The sequence is that of Nickel and cobalt resistance protein CnrB (cnrB) from Cupriavidus metallidurans (strain ATCC 43123 / DSM 2839 / NBRC 102507 / CH34) (Ralstonia metallidurans).